The following is a 141-amino-acid chain: Large ribosomal subunit protein uL11 (141 aa).

This sequence belongs to the universal ribosomal protein uL11 family. Part of the ribosomal stalk of the 50S ribosomal subunit. Interacts with L10 and the large rRNA to form the base of the stalk. L10 forms an elongated spine to which L12 dimers bind in a sequential fashion forming a multimeric L10(L12)X complex. In terms of processing, one or more lysine residues are methylated.

Its function is as follows. Forms part of the ribosomal stalk which helps the ribosome interact with GTP-bound translation factors. The polypeptide is Large ribosomal subunit protein uL11 (Thermotoga sp. (strain RQ2)).